The following is an 890-amino-acid chain: Translation initiation factor IF-2 (890 aa).

A disordered region spans residues 50–304 (LRQGSPEQEE…LQQEFERPTA (255 aa)). Composition is skewed to basic and acidic residues over residues 112 to 125 (KRSD…RKQE), 136 to 147 (RALEQEEAKREE), and 217 to 262 (ALKE…QEAK). One can recognise a tr-type G domain in the interval 390–559 (GRAPVVTVMG…VLQAELQELK (170 aa)). Residues 399–406 (GHVDHGKT) form a G1 region. 399 to 406 (GHVDHGKT) contributes to the GTP binding site. The segment at 424-428 (GITQH) is G2. The segment at 445–448 (DTPG) is G3. Residues 445 to 449 (DTPGH) and 499 to 502 (NKMD) each bind GTP. Residues 499 to 502 (NKMD) form a G4 region. Positions 535-537 (SAM) are G5.

It belongs to the TRAFAC class translation factor GTPase superfamily. Classic translation factor GTPase family. IF-2 subfamily.

The protein resides in the cytoplasm. One of the essential components for the initiation of protein synthesis. Protects formylmethionyl-tRNA from spontaneous hydrolysis and promotes its binding to the 30S ribosomal subunits. Also involved in the hydrolysis of GTP during the formation of the 70S ribosomal complex. This chain is Translation initiation factor IF-2, found in Halorhodospira halophila (strain DSM 244 / SL1) (Ectothiorhodospira halophila (strain DSM 244 / SL1)).